The following is a 553-amino-acid chain: 3-amino-2-hydroxy-4-methoxybenzoate diazotase (553 aa).

Residues 157–167 (ALPAAGATGPA) show a composition bias toward low complexity. The interval 157-178 (ALPAAGATGPAREGDAPPPAPV) is disordered.

Belongs to the ATP-dependent AMP-binding enzyme family.

The catalysed reaction is 3-amino-2-hydroxy-4-methoxybenzoate + nitrite + ATP = cremeomycin + AMP + diphosphate + H2O. Its pathway is antibiotic biosynthesis. In terms of biological role, part of a gene cluster involved in the biosynthesis of cremeomycin, a light-sensitive o-diazoquinone with antibacterial and antiproliferative effects. Catalyzes the last step of cremeomycin biosynthesis, the diazotization of 3-amino-2-hydroxy-4-methoxybenzoate (3,2,4-AHMBA) with nitrite to generate cremeomycin. In Streptomyces cremeus, this protein is 3-amino-2-hydroxy-4-methoxybenzoate diazotase.